The sequence spans 155 residues: Nucleosome assembly protein 1-like 5 (155 aa).

Residues 1-16 (MADPEKQGPAESRAED) are compositionally biased toward basic and acidic residues. The segment at 1-60 (MADPEKQGPAESRAEDEVMEGAQGGEDAATGDSATAPAAEEPQAPAENAPKPKNDFIESL) is disordered. The segment covering 27-49 (DAATGDSATAPAAEEPQAPAENA) has biased composition (low complexity). Residues 68 to 94 (VLALKKLQKRCDKIEAKFDKEFQALEK) adopt a coiled-coil conformation. A disordered region spans residues 119-155 (WTLEGEDDEDDEEEEDEEEEEEEAAAGATGGPDSAEK). Acidic residues predominate over residues 122–142 (EGEDDEDDEEEEDEEEEEEEA).

This sequence belongs to the nucleosome assembly protein (NAP) family.

Its subcellular location is the nucleus. This chain is Nucleosome assembly protein 1-like 5 (Nap1l5), found in Rattus norvegicus (Rat).